We begin with the raw amino-acid sequence, 440 residues long: Damage-control phosphatase ARMT1 (440 aa).

Positions 252 and 253 each coordinate Mn(2+). 252–253 provides a ligand contact to substrate; the sequence is DN. S-adenosyl-L-methionine contacts are provided by Glu-257 and Asp-290. Asp-290 is a Mn(2+) binding site. Residues 366-370 and Lys-403 each bind substrate; that span reads DLNYR. Residues 400–403 carry the Subfamily III RTxK motif motif; sequence RTLK.

Belongs to the damage-control phosphatase family. Sugar phosphate phosphatase III subfamily. Requires Mn(2+) as cofactor. Ni(2+) is required as a cofactor. In terms of processing, automethylated.

It carries out the reaction beta-D-fructose 1-phosphate + H2O = D-fructose + phosphate. The enzyme catalyses beta-D-fructose 6-phosphate = dihydroxyacetone + D-glyceraldehyde 3-phosphate. The catalysed reaction is L-glutamyl-[protein] + S-adenosyl-L-methionine = [protein]-L-glutamate 5-O-methyl ester + S-adenosyl-L-homocysteine. In terms of biological role, metal-dependent phosphatase that shows phosphatase activity against several substrates, including fructose-1-phosphate and fructose-6-phosphate. Its preference for fructose-1-phosphate, a strong glycating agent that causes DNA damage rather than a canonical yeast metabolite, suggests a damage-control function in hexose phosphate metabolism. Has also been shown to have O-methyltransferase activity that methylates glutamate residues of target proteins to form gamma-glutamyl methyl ester residues. Possibly methylates PCNA, suggesting it is involved in the DNA damage response. This is Damage-control phosphatase ARMT1 from Xenopus tropicalis (Western clawed frog).